The sequence spans 443 residues: Xaa-Pro dipeptidase (443 aa).

Residues D241, D252, H333, E378, and E417 each contribute to the Mn(2+) site.

This sequence belongs to the peptidase M24B family. Bacterial-type prolidase subfamily. The cofactor is Mn(2+).

It carries out the reaction Xaa-L-Pro dipeptide + H2O = an L-alpha-amino acid + L-proline. In terms of biological role, splits dipeptides with a prolyl residue in the C-terminal position. This Actinobacillus pleuropneumoniae serotype 5b (strain L20) protein is Xaa-Pro dipeptidase.